A 263-amino-acid chain; its full sequence is uncharacterized protein (263 aa).

Residue 31–38 coordinates ATP; that stretch reads GPTGSGKT.

Belongs to the CbbQ/NirQ/NorQ/GpvN family.

This is an uncharacterized protein from Staphylococcus saprophyticus subsp. saprophyticus (strain ATCC 15305 / DSM 20229 / NCIMB 8711 / NCTC 7292 / S-41).